We begin with the raw amino-acid sequence, 543 residues long: Cytochrome P450 monooxygenase 205 (543 aa).

The helical transmembrane segment at 9–29 (LISLGVAALAVAVWKAIVMVI) threads the bilayer. N-linked (GlcNAc...) asparagine glycosylation is found at N332 and N434. Heme is bound at residue C479.

Belongs to the cytochrome P450 family. It depends on heme as a cofactor.

It localises to the membrane. The protein operates within secondary metabolite biosynthesis. Its function is as follows. Cytochrome P450 monooxygenase that is able to use carbazole and phenanthrene as substrates for oxidation. This is Cytochrome P450 monooxygenase 205 from Postia placenta (strain ATCC 44394 / Madison 698-R) (Brown rot fungus).